Consider the following 680-residue polypeptide: Viral IRF2-like protein (680 aa).

A DNA-binding region (IRF tryptophan pentad repeat) is located at residues 7–103 (SEWLTDFIID…RPFTIYKGKM (97 aa)). Disordered stretches follow at residues 156–201 (SLRK…SENE), 220–257 (EEPE…HVHT), 343–365 (ETAS…ESVS), and 403–423 (ASPQ…ESVS). Low complexity predominate over residues 168-188 (KQAAAVATPTTSSAAEVSSRS). Residues 191–200 (EDTESSDSEN) are compositionally biased toward acidic residues. Positions 220–240 (EEPEPSGFGSSGQSSSLLAPD) are enriched in low complexity.

Belongs to the IRF family. As to quaternary structure, interacts with host EIF2AK2/PKR. Interacts with host USP7.

The protein localises to the host nucleus. It is found in the host cytoplasm. DNA-binding transcription factor that plays a role in the modulation of host immune response. Acts by interacting with host EIF2AK2/PKR and inhibiting its activation. In turn, EIF2AK2/PKR substrates including EIF2S1 or histone H2A are not phosphorylated. Inhibits type I interferon signaling by targeting host IRF3 during viral reactivation from latency. Attenuates the transcriptional activity of host FOXO3 via activation of the AKT1 signaling pathway, inhibiting FOXO3-mediated apoptosis. Also suppresses the expression of viral early lytic genes in both newly infected and reactivated infected host cells allowing regulation of viral life cycle by harnessing the interferon pathway. Mechanistically, promotes host PML bodies formation as well as host antiviral restriction factors IFIT1-3 expression leading to inhibition of viral early lytic proteins. Also regulates host TRAF3 and TRAF6 ubiquitination by interacting with USP7 deubiquitinase thereby influencing TRAF3/6-mediated signal transduction. The chain is Viral IRF2-like protein (vIRF-2) from Human herpesvirus 8 type P (isolate GK18) (HHV-8).